We begin with the raw amino-acid sequence, 710 residues long: Polyribonucleotide nucleotidyltransferase (710 aa).

Asp-487 and Asp-493 together coordinate Mg(2+). The KH domain occupies 554–613; it reads PRIHTMKISAEKIKDVIGKGGAVIRALTEETGTTIEIEDDGTIKIAATEGAAAKEAIRRI. Positions 623–691 constitute an S1 motif domain; sequence GRIYTGKVAR…RQGRVRLSMK (69 aa). Positions 691–710 are disordered; the sequence is KEAVEKPAEEANDASEAKGE.

The protein belongs to the polyribonucleotide nucleotidyltransferase family. As to quaternary structure, component of the RNA degradosome, which is a multiprotein complex involved in RNA processing and mRNA degradation. Requires Mg(2+) as cofactor.

The protein resides in the cytoplasm. It carries out the reaction RNA(n+1) + phosphate = RNA(n) + a ribonucleoside 5'-diphosphate. Functionally, involved in mRNA degradation. Catalyzes the phosphorolysis of single-stranded polyribonucleotides processively in the 3'- to 5'-direction. The protein is Polyribonucleotide nucleotidyltransferase of Vibrio campbellii (strain ATCC BAA-1116).